The sequence spans 541 residues: Formimidoyltransferase-cyclodeaminase (541 aa).

Positions 1–181 are formiminotransferase N-subdomain; the sequence is MAKLVECVPN…GATVTGARTF (181 aa). The active-site For formimidoyltransferase activity is His82. 163–172 serves as a coordination point for folate; the sequence is GPPAFVPQWG. Residues 182–326 form a formiminotransferase C-subdomain region; sequence LIAYNINLLC…PRERIIEYLV (145 aa). Residues 327–334 are linker; sequence QAGQEDKG. The cyclodeaminase/cyclohydrolase stretch occupies residues 335–541; it reads LVTKPLGAFV…VLALLEKREA (207 aa). Catalysis depends on Asp412, which acts as the For cyclodeaminase activity.

In the C-terminal section; belongs to the cyclodeaminase/cyclohydrolase family. The protein in the N-terminal section; belongs to the formiminotransferase family. Homooctamer, including four polyglutamate binding sites. The subunits are arranged as a tetramer of dimers, and form a planar ring-shaped structure.

Its subcellular location is the cytoplasm. The protein resides in the cytosol. It is found in the golgi apparatus. The protein localises to the cytoskeleton. It localises to the microtubule organizing center. Its subcellular location is the centrosome. The protein resides in the centriole. The catalysed reaction is 5-formimidoyltetrahydrofolate + L-glutamate = N-formimidoyl-L-glutamate + (6S)-5,6,7,8-tetrahydrofolate. The enzyme catalyses 5-formimidoyltetrahydrofolate + 2 H(+) = (6R)-5,10-methenyltetrahydrofolate + NH4(+). The protein operates within amino-acid degradation; L-histidine degradation into L-glutamate; L-glutamate from N-formimidoyl-L-glutamate (transferase route): step 1/1. Its function is as follows. Folate-dependent enzyme, that displays both transferase and deaminase activity. Serves to channel one-carbon units from formiminoglutamate to the folate pool. Binds and promotes bundling of vimentin filaments originating from the Golgi. This is Formimidoyltransferase-cyclodeaminase (FTCD) from Gallus gallus (Chicken).